We begin with the raw amino-acid sequence, 613 residues long: Zinc metalloproteinase-disintegrin-like MTP8 (613 aa).

The first 20 residues, 1-20 (MIEVLLVTICFTVFPYQGSP), serve as a signal peptide directing secretion. A propeptide spanning residues 21 to 191 (IILESGNVND…DETIEKISQL (171 aa)) is cleaved from the precursor. The Peptidase M12B domain maps to 205-401 (KYIELYVVVD…VRPQCILNKP (197 aa)). Glutamate 208 contributes to the Ca(2+) binding site. An N-linked (GlcNAc...) asparagine glycan is attached at asparagine 282. Residue aspartate 292 participates in Ca(2+) binding. 3 cysteine pairs are disulfide-bonded: cysteine 316–cysteine 396, cysteine 356–cysteine 380, and cysteine 358–cysteine 363. Zn(2+)-binding residues include histidine 341, histidine 345, and histidine 351. The Ca(2+) site is built by cysteine 396, asparagine 399, asparagine 414, phenylalanine 416, glutamate 418, glutamate 421, and aspartate 424. The Disintegrin domain occupies 409-495 (PPVCGNYFVE…KCPTDSFQRN (87 aa)). Intrachain disulfides connect cysteine 412–cysteine 441, cysteine 423–cysteine 436, cysteine 425–cysteine 431, cysteine 435–cysteine 458, cysteine 449–cysteine 455, cysteine 454–cysteine 480, cysteine 467–cysteine 487, cysteine 474–cysteine 506, cysteine 499–cysteine 511, cysteine 518–cysteine 568, cysteine 533–cysteine 575, cysteine 543–cysteine 577, cysteine 546–cysteine 556, cysteine 563–cysteine 601, and cysteine 595–cysteine 606. Asparagine 437 carries an N-linked (GlcNAc...) asparagine glycan. A D/ECD-tripeptide motif is present at residues 473–475 (DCD). Residues aspartate 475, leucine 476, glutamate 478, and aspartate 490 each contribute to the Ca(2+) site. Asparagine 550 and asparagine 572 each carry an N-linked (GlcNAc...) asparagine glycan.

The protein belongs to the venom metalloproteinase (M12B) family. P-III subfamily. As to quaternary structure, monomer. Zn(2+) is required as a cofactor. Expressed by the venom gland.

It is found in the secreted. Its function is as follows. Snake venom zinc metalloproteinase that may impair hemostasis in the prey. The chain is Zinc metalloproteinase-disintegrin-like MTP8 from Drysdalia coronoides (White-lipped snake).